The sequence spans 832 residues: Sodium/hydrogen exchanger 3 (832 aa).

A signal peptide spans 1–29; that stretch reads MGRNRSGCVARCVSLTALVLLLCCPVVRS. The Extracellular portion of the chain corresponds to 30–66; it reads SEAETDPDSHTEHGDSHGGSREGNDTGFQIVTFRWEH. The tract at residues 31–51 is disordered; that stretch reads EAETDPDSHTEHGDSHGGSRE. Over residues 36–51 the composition is skewed to basic and acidic residues; that stretch reads PDSHTEHGDSHGGSRE. The helical transmembrane segment at 67 to 89 threads the bilayer; the sequence is VQTPYVIALWILVASLGKIVFHL. Over 90 to 97 the chain is Cytoplasmic; that stretch reads SEKVTSVV. A helical transmembrane segment spans residues 98–117; sequence PESALLIVLGLILGGIVWAA. At 118 to 126 the chain is on the extracellular side; that stretch reads DHSASFTLT. The helical transmembrane segment at 127–144 threads the bilayer; sequence PTVFFFYLLPPIVLDAGY. The Cytoplasmic portion of the chain corresponds to 145–147; it reads FMP. Residues 148–183 traverse the membrane as a helical segment; that stretch reads NRHFFGNLGTILTYAVIGTVWNAATTGLSLYGVFLL. A 1,2-diacyl-sn-glycero-3-phospho-(1D-myo-inositol) is bound by residues Gly153, Gly156, and Thr157. At 184–196 the chain is on the extracellular side; that stretch reads GLMGDLKAGLLEF. The helical transmembrane segment at 197 to 218 threads the bilayer; the sequence is LLFGSLIAAVDPVAVLAVFEEV. Over 219–220 the chain is Cytoplasmic; the sequence is HV. The chain crosses the membrane as a helical span at residues 221-252; the sequence is NEVLFIIVFGESLLNDAVTVVLYNVFNSFVEV. At 253–259 the chain is on the extracellular side; the sequence is GAGNVQG. Residues 260–294 form a helical membrane-spanning segment; sequence LDYFKGIVSFFVVSLGGTAVGIIFAFILSLVTRFT. Residues 295-296 are Cytoplasmic-facing; the sequence is KH. A helical membrane pass occupies residues 297-319; sequence VRVIEPGFVFVISYLSYLTADML. The Extracellular segment spans residues 320–321; sequence SL. Residues 322–338 form a helical membrane-spanning segment; it reads SAILAITFCGICCQKYV. Residues 339–345 are Cytoplasmic-facing; it reads KANLCEQ. A helical transmembrane segment spans residues 346–374; it reads SITTVRYAMKMLASGAETIIFMFLGISAV. The Extracellular portion of the chain corresponds to 375–382; it reads NPTIWTWN. A helical membrane pass occupies residues 383-404; that stretch reads TAFILLTLVFISVYRVIGVVIQ. Residues 405 to 417 lie on the Cytoplasmic side of the membrane; that stretch reads TWILNHYRVVQLE. The helical transmembrane segment at 418 to 441 threads the bilayer; that stretch reads IIDQVVMSYGGLRGAVAFALVVLL. The Extracellular portion of the chain corresponds to 442 to 448; that stretch reads DSNYVGE. A helical membrane pass occupies residues 449-482; the sequence is RRLFVSTTIIVVYFTVIFQGLTIKPLVKWLKVKR. At 483-832 the chain is on the cytoplasmic side; the sequence is SQHKEPLLNE…PLSFLPESSM (350 aa). A 1,2-diacyl-sn-glycero-3-phospho-(1D-myo-inositol) is bound by residues Gln512, Ile513, and His515. The segment at 740-760 is disordered; that stretch reads TPASNDADETGTGIDNPSFSN.

It belongs to the monovalent cation:proton antiporter 1 (CPA1) transporter (TC 2.A.36) family. As to quaternary structure, homodimer. As to expression, detected in early distal renal tubules in the kidney bundle zone, in proximal and late distal tubules in the kidney sinus zone, in absorptive epithelial cells of the intestine and in rectal epithelium (at protein level). Isoform 1 is expressed strongly in the gills, at intermediate levels in the kidney, spleen, rectum, spiral intestine and skin, and weakly in the brain, blood and rectal gland. Isoform 2 is expressed strongly in the kidney, rectum and spiral intestine, and weakly in muscles and the rectal gland.

It is found in the apical cell membrane. It localises to the cell membrane. The protein localises to the recycling endosome membrane. Its subcellular location is the early endosome membrane. It carries out the reaction Na(+)(in) + H(+)(out) = Na(+)(out) + H(+)(in). Seems to switch between active and inactive modes in response to various stimuli. Activated directly or indirectly by membrane phosphatidylinositol (PIs). Regulated by a variety of auxiliary proteins, which facilitate the maturation, cell surface expression and function of the transporter. Inhibited specifically by the drug tenapanor. Plasma membrane Na(+)/H(+) antiporter. Exchanges intracellular H(+) ions for extracellular Na(+) in 1:1 stoichiometry, playing a key role in salt and fluid absorption and pH homeostasis. Major apical Na(+)/H(+) exchanger in kidney and intestine playing an important role in renal and intestine Na(+) absorption and blood pressure regulation. The sequence is that of Sodium/hydrogen exchanger 3 from Triakis scyllium (Banded houndshark).